The primary structure comprises 92 residues: Phospholemman (92 aa).

The N-terminal stretch at Met-1–Ala-20 is a signal peptide. Over Ala-22–Ser-35 the chain is Extracellular. The helical transmembrane segment at Leu-36 to Leu-56 threads the bilayer. Residues Lys-57–Arg-92 are Cytoplasmic-facing. Residues Ala-67–Arg-92 form a disordered region. Position 79 is a phosphothreonine (Thr-79). Ser-82 is subject to Phosphoserine. Ser-83 is subject to Phosphoserine; by PKA and PKC. Positions Ser-83–Arg-92 are enriched in basic residues. Phosphoserine; by PKA is present on Ser-88. Position 89 is a phosphothreonine; by PKC (Thr-89).

This sequence belongs to the FXYD family. As to quaternary structure, homotetramer. Monomer. Regulatory subunit of the sodium/potassium-transporting ATPase (NKA) which is composed of a catalytic alpha subunit, a non-catalytic beta subunit and an additional regulatory subunit. The monomeric form associates with NKA while the oligomeric form does not. Interacts with the catalytic alpha-1 subunit ATP1A1. Also interacts with the catalytic alpha-2 and alpha-3 subunits ATP1A2 and ATP1A3. Very little interaction with ATP1A1, ATP1A2 or ATP1A3 when phosphorylated at Ser-83. Interacts with the non-catalytic beta-1 subunit ATP1B1. Oxidative stress decreases interaction with ATP1A1 but increases interaction with ATP1B1. In terms of processing, major plasma membrane substrate for cAMP-dependent protein kinase (PKA) and protein kinase C (PKC) in several different tissues. Phosphorylated in response to insulin and adrenergic stimulation. Phosphorylation at Ser-88 stimulates sodium/potassium-transporting ATPase activity while the unphosphorylated form inhibits sodium/potassium-transporting ATPase activity. Phosphorylation increases tetramerization, decreases binding to ATP1A1 and reduces inhibition of ATP1A1 activity. Phosphorylation at Ser-83 leads to greatly reduced interaction with ATP1A1, ATP1A2 and ATP1A3. May be phosphorylated by DMPK. Palmitoylation increases half-life and stability and is enhanced upon phosphorylation at Ser-88 by PKA. Post-translationally, glutathionylated. In terms of tissue distribution, expressed in ventricular myocytes (at protein level).

It localises to the cell membrane. Its subcellular location is the sarcolemma. The protein localises to the apical cell membrane. It is found in the membrane. The protein resides in the caveola. It localises to the T-tubule. In terms of biological role, associates with and regulates the activity of the sodium/potassium-transporting ATPase (NKA) which transports Na(+) out of the cell and K(+) into the cell. Inhibits NKA activity in its unphosphorylated state and stimulates activity when phosphorylated. Reduces glutathionylation of the NKA beta-1 subunit ATP1B1, thus reversing glutathionylation-mediated inhibition of ATP1B1. Contributes to female sexual development by maintaining the excitability of neurons which secrete gonadotropin-releasing hormone. This is Phospholemman from Oryctolagus cuniculus (Rabbit).